We begin with the raw amino-acid sequence, 110 residues long: Protein SPIRAL1-like 2 (110 aa).

Positions 28–110 are disordered; the sequence is AVNKTPAETE…LDYLFGGGSN (83 aa). Residues 40-52 show a composition bias toward low complexity; that stretch reads AHAPPTQAAAANA. Polar residues predominate over residues 63-82; sequence LNSNSANNYMRAEGQNTGNF. Ser-67 is modified (phosphoserine). The span at 95–110 shows a compositional bias: gly residues; it reads PGGGSSLDYLFGGGSN.

It belongs to the SPIRAL1 family. Ubiquitous.

Acts redundantly with SPR1 in maintaining the cortical microtubules organization essential for anisotropic cell growth. The protein is Protein SPIRAL1-like 2 (SP1L2) of Arabidopsis thaliana (Mouse-ear cress).